The following is a 184-amino-acid chain: ATP synthase subunit b, chloroplastic (184 aa).

Residues L27 to L49 traverse the membrane as a helical segment.

Belongs to the ATPase B chain family. In terms of assembly, F-type ATPases have 2 components, F(1) - the catalytic core - and F(0) - the membrane proton channel. F(1) has five subunits: alpha(3), beta(3), gamma(1), delta(1), epsilon(1). F(0) has four main subunits: a(1), b(1), b'(1) and c(10-14). The alpha and beta chains form an alternating ring which encloses part of the gamma chain. F(1) is attached to F(0) by a central stalk formed by the gamma and epsilon chains, while a peripheral stalk is formed by the delta, b and b' chains.

It localises to the plastid. Its subcellular location is the chloroplast thylakoid membrane. Functionally, f(1)F(0) ATP synthase produces ATP from ADP in the presence of a proton or sodium gradient. F-type ATPases consist of two structural domains, F(1) containing the extramembraneous catalytic core and F(0) containing the membrane proton channel, linked together by a central stalk and a peripheral stalk. During catalysis, ATP synthesis in the catalytic domain of F(1) is coupled via a rotary mechanism of the central stalk subunits to proton translocation. Its function is as follows. Component of the F(0) channel, it forms part of the peripheral stalk, linking F(1) to F(0). This chain is ATP synthase subunit b, chloroplastic, found in Populus alba (White poplar).